Consider the following 1658-residue polypeptide: Protein TIC 214 (1658 aa).

The next 6 helical transmembrane spans lie at 28–48, 52–72, 82–102, 130–150, 165–185, and 199–219; these read FGLY…ILTI, LLGG…GQLI, IYVM…YMLF, IFLD…SPVF, ISFV…FINL, and VNYP…ILAL.

This sequence belongs to the TIC214 family. As to quaternary structure, part of the Tic complex.

The protein localises to the plastid. The protein resides in the chloroplast inner membrane. Functionally, involved in protein precursor import into chloroplasts. May be part of an intermediate translocation complex acting as a protein-conducting channel at the inner envelope. The sequence is that of Protein TIC 214 from Huperzia lucidula (Shining clubmoss).